The primary structure comprises 274 residues: 2,3,4,5-tetrahydropyridine-2,6-dicarboxylate N-succinyltransferase (274 aa).

2 residues coordinate substrate: R104 and D141.

The protein belongs to the transferase hexapeptide repeat family. As to quaternary structure, homotrimer.

The protein localises to the cytoplasm. The enzyme catalyses (S)-2,3,4,5-tetrahydrodipicolinate + succinyl-CoA + H2O = (S)-2-succinylamino-6-oxoheptanedioate + CoA. It functions in the pathway amino-acid biosynthesis; L-lysine biosynthesis via DAP pathway; LL-2,6-diaminopimelate from (S)-tetrahydrodipicolinate (succinylase route): step 1/3. The chain is 2,3,4,5-tetrahydropyridine-2,6-dicarboxylate N-succinyltransferase from Buchnera aphidicola subsp. Acyrthosiphon pisum (strain APS) (Acyrthosiphon pisum symbiotic bacterium).